We begin with the raw amino-acid sequence, 29 residues long: Cytochrome b6-f complex subunit 8 (29 aa).

The chain crosses the membrane as a helical span at residues 3–23 (ILSISWAFLMVVFTFSLSLVV).

This sequence belongs to the PetN family. The 4 large subunits of the cytochrome b6-f complex are cytochrome b6, subunit IV (17 kDa polypeptide, PetD), cytochrome f and the Rieske protein, while the 4 small subunits are PetG, PetL, PetM and PetN. The complex functions as a dimer.

It is found in the plastid. The protein resides in the chloroplast thylakoid membrane. Its function is as follows. Component of the cytochrome b6-f complex, which mediates electron transfer between photosystem II (PSII) and photosystem I (PSI), cyclic electron flow around PSI, and state transitions. This chain is Cytochrome b6-f complex subunit 8, found in Chara vulgaris (Common stonewort).